Consider the following 74-residue polypeptide: ATP synthase subunit c (74 aa).

Helical transmembrane passes span 5–25 (LAHI…IGVG) and 49–69 (LFIG…VALL).

The protein belongs to the ATPase C chain family. As to quaternary structure, F-type ATPases have 2 components, F(1) - the catalytic core - and F(0) - the membrane proton channel. F(1) has five subunits: alpha(3), beta(3), gamma(1), delta(1), epsilon(1). F(0) has three main subunits: a(1), b(2) and c(10-14). The alpha and beta chains form an alternating ring which encloses part of the gamma chain. F(1) is attached to F(0) by a central stalk formed by the gamma and epsilon chains, while a peripheral stalk is formed by the delta and b chains.

It is found in the cell inner membrane. In terms of biological role, f(1)F(0) ATP synthase produces ATP from ADP in the presence of a proton or sodium gradient. F-type ATPases consist of two structural domains, F(1) containing the extramembraneous catalytic core and F(0) containing the membrane proton channel, linked together by a central stalk and a peripheral stalk. During catalysis, ATP synthesis in the catalytic domain of F(1) is coupled via a rotary mechanism of the central stalk subunits to proton translocation. Functionally, key component of the F(0) channel; it plays a direct role in translocation across the membrane. A homomeric c-ring of between 10-14 subunits forms the central stalk rotor element with the F(1) delta and epsilon subunits. This chain is ATP synthase subunit c, found in Ruegeria pomeroyi (strain ATCC 700808 / DSM 15171 / DSS-3) (Silicibacter pomeroyi).